The following is a 203-amino-acid chain: FMN-dependent NADH:quinone oxidoreductase 1 (203 aa).

Residues Ser9, 15–17 (SAS), 95–98 (MYNF), and 139–142 (TAGG) each bind FMN.

Belongs to the azoreductase type 1 family. In terms of assembly, homodimer. FMN serves as cofactor.

The catalysed reaction is 2 a quinone + NADH + H(+) = 2 a 1,4-benzosemiquinone + NAD(+). It catalyses the reaction N,N-dimethyl-1,4-phenylenediamine + anthranilate + 2 NAD(+) = 2-(4-dimethylaminophenyl)diazenylbenzoate + 2 NADH + 2 H(+). Quinone reductase that provides resistance to thiol-specific stress caused by electrophilic quinones. Its function is as follows. Also exhibits azoreductase activity. Catalyzes the reductive cleavage of the azo bond in aromatic azo compounds to the corresponding amines. The chain is FMN-dependent NADH:quinone oxidoreductase 1 from Pseudomonas putida (strain ATCC 47054 / DSM 6125 / CFBP 8728 / NCIMB 11950 / KT2440).